The primary structure comprises 433 residues: Trigger factor (433 aa).

A PPIase FKBP-type domain is found at 163–248 (GDTVNIDFSG…VNEIKFKEVP (86 aa)).

It belongs to the FKBP-type PPIase family. Tig subfamily.

Its subcellular location is the cytoplasm. The catalysed reaction is [protein]-peptidylproline (omega=180) = [protein]-peptidylproline (omega=0). Functionally, involved in protein export. Acts as a chaperone by maintaining the newly synthesized protein in an open conformation. Functions as a peptidyl-prolyl cis-trans isomerase. This is Trigger factor from Staphylococcus aureus (strain bovine RF122 / ET3-1).